The chain runs to 425 residues: Serine--tRNA ligase (425 aa).

The disordered stretch occupies residues 108–134 (YPNLPSEACPDGRSEDDNKEVRRWGDP). The span at 117 to 134 (PDGRSEDDNKEVRRWGDP) shows a compositional bias: basic and acidic residues. 233-235 (TAE) is an L-serine binding site. Residue 264–266 (RRE) coordinates ATP. E287 contributes to the L-serine binding site. 351 to 354 (EISS) provides a ligand contact to ATP. S385 lines the L-serine pocket.

It belongs to the class-II aminoacyl-tRNA synthetase family. Type-1 seryl-tRNA synthetase subfamily. Homodimer. The tRNA molecule binds across the dimer.

The protein resides in the cytoplasm. The catalysed reaction is tRNA(Ser) + L-serine + ATP = L-seryl-tRNA(Ser) + AMP + diphosphate + H(+). It catalyses the reaction tRNA(Sec) + L-serine + ATP = L-seryl-tRNA(Sec) + AMP + diphosphate + H(+). Its pathway is aminoacyl-tRNA biosynthesis; selenocysteinyl-tRNA(Sec) biosynthesis; L-seryl-tRNA(Sec) from L-serine and tRNA(Sec): step 1/1. Functionally, catalyzes the attachment of serine to tRNA(Ser). Is also able to aminoacylate tRNA(Sec) with serine, to form the misacylated tRNA L-seryl-tRNA(Sec), which will be further converted into selenocysteinyl-tRNA(Sec). This Synechococcus sp. (strain CC9311) protein is Serine--tRNA ligase.